Here is a 98-residue protein sequence, read N- to C-terminus: Defensin-like protein 192 (98 aa).

The N-terminal stretch at 1-27 (MATKSVSTFAIFFILVLAIFETPEIEA) is a signal peptide. Cystine bridges form between cysteine 32–cysteine 86, cysteine 45–cysteine 69, cysteine 54–cysteine 81, and cysteine 58–cysteine 83.

This sequence belongs to the DEFL family. Protease inhibitor I18 (RTI/MTI-2) subfamily.

Its subcellular location is the secreted. The polypeptide is Defensin-like protein 192 (ATTI7) (Arabidopsis thaliana (Mouse-ear cress)).